A 329-amino-acid chain; its full sequence is Zygote arrest protein 1 (329 aa).

2 disordered regions span residues 106–132 (LRRR…RTQA) and 146–218 (FREE…DDLK). Positions 149-162 (EGEEEEDTDLEVTE) are enriched in acidic residues. Basic and acidic residues predominate over residues 166–177 (SAEKLESAEKNV). The segment at 231–314 (KYGFYHCKDC…RQDLCGRCKG (84 aa)) adopts a 3CxxC-type zinc-finger fold.

This sequence belongs to the ZAR1 family. As to expression, specifically expressed in ovaries but absent in testes.

It is found in the cytoplasm. Its subcellular location is the cytoplasmic ribonucleoprotein granule. In terms of biological role, mRNA-binding protein required for maternal mRNA storage, translation and degradation during oocyte maturation. Probably promotes formation of some phase-separated membraneless compartment that stores maternal mRNAs in oocytes: acts by undergoing liquid-liquid phase separation upon binding to maternal mRNAs. Binds to the 3'-UTR of zona pellucida mRNAs, inhibiting their translation. The protein is Zygote arrest protein 1 of Danio rerio (Zebrafish).